The following is a 227-amino-acid chain: ATP-dependent dethiobiotin synthetase BioD (227 aa).

Position 13–18 (13–18) interacts with ATP; that stretch reads DIGKTY. Thr17 contributes to the Mg(2+) binding site. The active site involves Lys38. Ser42 lines the substrate pocket. ATP contacts are provided by residues Asp55, 116–119, and 179–180; these read EGSG and NN. The Mg(2+) site is built by Asp55 and Glu116.

This sequence belongs to the dethiobiotin synthetase family. Homodimer. Mg(2+) is required as a cofactor.

It localises to the cytoplasm. It carries out the reaction (7R,8S)-7,8-diammoniononanoate + CO2 + ATP = (4R,5S)-dethiobiotin + ADP + phosphate + 3 H(+). It participates in cofactor biosynthesis; biotin biosynthesis; biotin from 7,8-diaminononanoate: step 1/2. In terms of biological role, catalyzes a mechanistically unusual reaction, the ATP-dependent insertion of CO2 between the N7 and N8 nitrogen atoms of 7,8-diaminopelargonic acid (DAPA, also called 7,8-diammoniononanoate) to form a ureido ring. This Clostridium botulinum (strain 657 / Type Ba4) protein is ATP-dependent dethiobiotin synthetase BioD.